A 251-amino-acid chain; its full sequence is uncharacterized protein (251 aa).

Residue 10 to 34 (ITGAGSGIGKKAAVMFAERGAKVAI) coordinates NADP(+). Residue serine 139 coordinates substrate. Tyrosine 152 functions as the Proton acceptor in the catalytic mechanism.

Belongs to the short-chain dehydrogenases/reductases (SDR) family.

This is an uncharacterized protein from Thermotoga maritima (strain ATCC 43589 / DSM 3109 / JCM 10099 / NBRC 100826 / MSB8).